The sequence spans 483 residues: RNA-binding protein Nova-1 (483 aa).

Residues 1-44 (MMAAAPIQQNGTHTGVPIDLDPPDSRKRPLEAPPEAGSTKRTNT) are disordered. The short motif at 27–43 (KRPLEAPPEAGSTKRTN) is the Bipartite nuclear localization signal element. 3 consecutive KH domains span residues 49 to 116 (QYFL…HGFI), 147 to 213 (IKQV…VELI), and 397 to 464 (KDVV…QYLI). The segment at 395-479 (GSKDVVEIAV…YEQGVRAANP (85 aa)) is required for RNA binding.

As to quaternary structure, interacts with PTBP2; the interaction is direct.

The protein resides in the nucleus. Functionally, functions to regulate alternative splicing in neurons by binding pre-mRNA in a sequence-specific manner to activate exon inclusion or exclusion. It binds specifically to the sequences 5'-YCAY-3' and regulates splicing in only a subset of regulated exons. Binding to an exonic 5'-YCAY-3' cluster changes the protein complexes assembled on pre-mRNA, blocking U1 snRNP binding and exon inclusion, whereas binding to an intronic 5'-YCAY-3' cluster enhances spliceosome assembly and exon inclusion. Binding to 5'-YCAY-3' clusters results in a local and asymmetric action to regulate spliceosome assembly and alternative splicing in neurons. Binding to an exonic 5'-YCAY-3' cluster changed the protein complexes assembled on pre-mRNA, blocking U1 snRNP (small nuclear ribonucleoprotein) binding and exon inclusion, whereas binding to an intronic 5'-YCAY-3' cluster enhanced spliceosome assembly and exon inclusion. With NOVA1, they perform unique biological functions in different brain areas and cell types. Autoregulates its own expression by acting as a splicing repressor. Acts to activate the inclusion of exon E3A in the glycine receptor alpha-2 chain and of exon E9 in gamma-aminobutyric-acid receptor gamma-2 subunit via a distal downstream UCAU-rich intronic splicing enhancer. Acts to regulate a novel glycine receptor alpha-2 chain splice variant (alpha-2N) in developing spinal cord. The polypeptide is RNA-binding protein Nova-1 (NOVA1) (Macaca fascicularis (Crab-eating macaque)).